A 361-amino-acid chain; its full sequence is 3-galactosyl-N-acetylglucosaminide 4-alpha-L-fucosyltransferase FUT3 (361 aa).

The Cytoplasmic segment spans residues 1–15; that stretch reads MDPLGAAKPQWPWRR. Residues 16 to 34 traverse the membrane as a helical; Signal-anchor for type II membrane protein segment; the sequence is CLAALLFQLLVAVCFFSYL. At 35 to 361 the chain is on the lumenal side; it reads RVSRDDATGS…TVRSIAAWFT (327 aa). The interval 39 to 58 is disordered; the sequence is DDATGSPRAPSGSSRQDTTP. 2 N-linked (GlcNAc...) asparagine glycosylation sites follow: asparagine 154 and asparagine 185.

The protein belongs to the glycosyltransferase 10 family. Glycosylated. Highly expressed in stomach, colon, small intestine, lung and kidney and to a lesser extent in salivary gland, bladder, uterus and liver.

It localises to the golgi apparatus. Its subcellular location is the golgi stack membrane. The catalysed reaction is a beta-D-galactosyl-(1-&gt;3)-N-acetyl-beta-D-glucosaminyl derivative + GDP-beta-L-fucose = a beta-D-galactosyl-(1-&gt;3)-[alpha-L-fucosyl-(1-&gt;4)]-N-acetyl-beta-D-glucosaminyl derivative + GDP + H(+). It carries out the reaction an N-acetyl-alpha-neuraminyl-(2-&gt;3)-beta-D-galactosyl-(1-&gt;4)-N-acetyl-beta-D-glucosaminyl derivative + GDP-beta-L-fucose = an alpha-Neu5Ac-(2-&gt;3)-beta-D-Gal-(1-&gt;4)-[alpha-L-Fuc-(1-&gt;3)]-beta-D-GlcNAc derivative + GDP + H(+). The enzyme catalyses a beta-D-galactosyl-(1-&gt;4)-N-acetyl-beta-D-glucosaminyl derivative + GDP-beta-L-fucose = a beta-D-galactosyl-(1-&gt;4)-[alpha-L-fucosyl-(1-&gt;3)]-N-acetyl-beta-D-glucosaminyl derivative + GDP + H(+). It catalyses the reaction an alpha-Neu5Ac-(2-&gt;3)-beta-D-Gal-(1-&gt;4)-beta-D-GlcNAc-(1-&gt;3)-beta-D-Gal-(1-&gt;4)-[alpha-L-Fuc-(1-&gt;3)]-beta-D-GlcNAc derivative + GDP-beta-L-fucose = an alpha-Neu5Ac-(2-&gt;3)-beta-D-Gal-(1-&gt;4)-[alpha-L-Fuc-(1-&gt;3)]-beta-D-GlcNAc-(1-&gt;3)-beta-D-Gal-(1-&gt;4)-[alpha-L-Fuc-(1-&gt;3)]-beta-D-GlcNAc derivative + GDP + H(+). The catalysed reaction is Lc4Cer + GDP-beta-L-fucose = a lactoside III(4)-a-Fuc-Lc4Cer + GDP + H(+). It carries out the reaction a beta-D-Gal-(1-&gt;3)-beta-D-GlcNAc-(1-&gt;3)-beta-D-Gal-(1-&gt;4)-beta-D-Glc-(1&lt;-&gt;1')-Cer(d18:1(4E)) + GDP-beta-L-fucose = a III(4)-a-Fuc-Lc4Cer(d18:1(4E)) + GDP + H(+). The enzyme catalyses N-acetyl-alpha-neuraminosyl-(2-&gt;3)-beta-D-galactosyl-(1-&gt;3)-[N-acetyl-alpha-neuraminosyl-(2-&gt;6)]-N-acetyl-beta-D-glucosaminyl-(1-&gt;3)-beta-D-galactosyl-(1-&gt;4)-beta-D-glucosyl-(1&lt;-&gt;1')-N-acyl-sphing-4-enine + GDP-beta-L-fucose = N-acetyl-alpha-neuraminosyl-(2-&gt;3)-beta-D-galactosyl-(1-&gt;3)-alpha-L-fucosyl-(1-&gt;4)-[N-acetyl-alpha-neuraminosyl-(2-&gt;6)-N-acetyl-beta-D-glucosaminyl-(1-&gt;3)]-beta-D-galactosyl-(1-&gt;4)-beta-D-glucosyl-(1&lt;-&gt;1')-N-acyl-sphing-4-enine + GDP + H(+). It catalyses the reaction N-acetyl-alpha-neuraminosyl-(2-&gt;3)-beta-D-galactosyl-(1-&gt;3)-N-acetyl-beta-D-glucosaminyl-(1-&gt;3)-beta-D-galactosyl-(1-&gt;4)-beta-D-glucosyl-(1&lt;-&gt;1')-N-acyl-sphing-4-enine + GDP-beta-L-fucose = N-acetyl-alpha-neuraminosyl-(2-&gt;3)-beta-D-galactosyl-(1-&gt;3)-alpha-L-fucosyl-(1-&gt;4)-[N-acetyl-beta-D-glucosaminyl-(1-&gt;3)]-beta-D-galactosyl-(1-&gt;4)-beta-D-glucosyl-(1&lt;-&gt;1')-N-acyl-sphing-4-enine + GDP + H(+). The catalysed reaction is beta-D-galactosyl-(1-&gt;3)-N-acetyl-D-glucosamine + GDP-beta-L-fucose = beta-D-galactosyl-(1-&gt;3)-[alpha-L-fucosyl-(1-&gt;4)]-N-acetyl-D-glucosamine + GDP + H(+). It carries out the reaction alpha-L-Fuc-(1-&gt;2)-beta-D-Gal-(1-&gt;3)-D-GlcNAc + GDP-beta-L-fucose = alpha-L-Fuc-(1-&gt;2)-beta-D-Gal-(1-&gt;3)-[alpha-L-Fuc-(1-&gt;4)]-D-GlcNAc + GDP + H(+). The enzyme catalyses alpha-L-Fuc-(1-&gt;2)-beta-D-Gal-(1-&gt;4)-D-GlcNAc + GDP-beta-L-fucose = alpha-L-Fuc-(1-&gt;2)-beta-D-Gal-(1-&gt;4)-[alpha-L-Fuc-(1-&gt;3)]-D-GlcNAc + GDP + H(+). It catalyses the reaction beta-D-galactosyl-(1-&gt;4)-N-acetyl-D-glucosamine + GDP-beta-L-fucose = beta-D-galactosyl-(1-&gt;4)-[alpha-L-fucosyl-(1-&gt;3)]-N-acetyl-D-glucosamine + GDP + H(+). The catalysed reaction is lactose + GDP-beta-L-fucose = beta-D-galactosyl-(1-&gt;4)-[alpha-L-fucosyl-(1-&gt;3)]-D-glucose + GDP + H(+). It carries out the reaction an alpha-Neu5Ac-(2-&gt;3)-beta-D-Gal-(1-&gt;3)-D-GlcNAc derivative + GDP-beta-L-fucose = an alpha-Neu5Ac-(2-&gt;3)-beta-D-Gal-(1-&gt;3)-[alpha-L-Fuc-(1-&gt;4)]-beta-D-GlcNAc derivative + GDP + H(+). Its pathway is protein modification; protein glycosylation. Its function is as follows. Catalyzes the transfer of L-fucose, from a guanosine diphosphate-beta-L-fucose, to both the subterminal N-acetyl glucosamine (GlcNAc) of type 1 chain (beta-D-Gal-(1-&gt;3)-beta-D-GlcNAc) glycolipids and oligosaccharides via an alpha(1,4) linkage, and the subterminal glucose (Glc) or GlcNAc of type 2 chain (beta-D-Gal-(1-&gt;4)-beta-D-GlcNAc) oligosaccharides via an alpha(1,3) linkage, independently of the presence of terminal alpha-L-fucosyl-(1,2) moieties on the terminal galactose of these acceptors. Through its catalytic activity, participates in the synthesis of antigens of the Lewis blood group system, i.e. Lewis a (Le(a)), lewis b (Le(b)), Lewis x/SSEA-1 (Le(x)) and lewis y (Le(y)) antigens. Also catalyzes the transfer of L-fucose to subterminal GlcNAc of sialyl- and disialyl-lactotetraosylceramide to produce sialyl Lewis a (sLe(a)) and disialyl Lewis a via an alpha(1,4) linkage and therefore may regulate cell surface sLe(a) expression and consequently regulates adhesive properties to E-selectin, cell proliferation and migration. Catalyzes the transfer of an L-fucose to 3'-sialyl-N-acetyllactosamine by an alpha(1,3) linkage, which allows the formation of sialyl-Lewis x structure and therefore may regulate the sialyl-Lewis x surface antigen expression and consequently adhesive properties to E-selectin. Prefers type 1 chain over type 2 acceptors. Type 1 tetrasaccharide is a better acceptor than type 1 disaccharide suggesting that a beta anomeric configuration of GlcNAc in the substrate is preferred. Lewis-positive (Le(+)) individuals have an active enzyme while Lewis-negative (Le(-)) individuals have an inactive enzyme. This chain is 3-galactosyl-N-acetylglucosaminide 4-alpha-L-fucosyltransferase FUT3, found in Homo sapiens (Human).